We begin with the raw amino-acid sequence, 309 residues long: Flavonol sulfotransferase-like (309 aa).

3'-phosphoadenylyl sulfate is bound at residue 59–64 (KTGTTW). His-119 acts as the Proton acceptor in catalysis. 3'-phosphoadenylyl sulfate-binding positions include Arg-141, Ser-149, Tyr-207, and 274 to 276 (RKG).

The protein belongs to the sulfotransferase 1 family.

It is found in the cytoplasm. The polypeptide is Flavonol sulfotransferase-like (Flaveria bidentis (Coastal plain yellowtops)).